The following is a 158-amino-acid chain: Na(+)/H(+) antiporter subunit E (158 aa).

2 consecutive transmembrane segments (helical) span residues 22–41 (YTAV…LFVL) and 54–76 (IWAI…IDVI).

The protein belongs to the CPA3 antiporters (TC 2.A.63) subunit E family. As to quaternary structure, forms a heterooligomeric complex that consists of seven subunits: MrpA, MrpB, MrpC, MrpD, MrpE, MrpF and MrpG.

It is found in the cell membrane. In terms of biological role, mnh complex is a Na(+)Li(+)/H(+) antiporter involved in Na(+) and/or Li(+) excretion and Na(+) resistance. Na(+)/H(+) antiport consumes a transmembrane electrical potential, and is thus inferred to be electrogenic. Does not transport K(+), Ca(2+) or Mg(2+). Mrp complex is a Na(+)/H(+) antiporter involved in Na(+) excretion and Na(+) resistance. The chain is Na(+)/H(+) antiporter subunit E (mrpE) from Alkalihalophilus pseudofirmus (strain ATCC BAA-2126 / JCM 17055 / OF4) (Bacillus pseudofirmus).